Here is a 394-residue protein sequence, read N- to C-terminus: Stabilizer of axonemal microtubules 2 (394 aa).

6 mn regions span residues 110–122, 144–158, 244–256, 278–292, 312–324, and 346–360; these read STTF…PQEI, DTSH…QLEV, NSTS…PYQA, KSTT…EICR, LSTF…PHEL, and VTMY…KQEI.

The protein belongs to the FAM154 family.

This Mus musculus (Mouse) protein is Stabilizer of axonemal microtubules 2 (Saxo2).